A 286-amino-acid polypeptide reads, in one-letter code: Bifunctional protein FolD (286 aa).

Residues 165–167, S190, and I231 contribute to the NADP(+) site; that span reads GRS.

It belongs to the tetrahydrofolate dehydrogenase/cyclohydrolase family. As to quaternary structure, homodimer.

It catalyses the reaction (6R)-5,10-methylene-5,6,7,8-tetrahydrofolate + NADP(+) = (6R)-5,10-methenyltetrahydrofolate + NADPH. It carries out the reaction (6R)-5,10-methenyltetrahydrofolate + H2O = (6R)-10-formyltetrahydrofolate + H(+). It participates in one-carbon metabolism; tetrahydrofolate interconversion. Functionally, catalyzes the oxidation of 5,10-methylenetetrahydrofolate to 5,10-methenyltetrahydrofolate and then the hydrolysis of 5,10-methenyltetrahydrofolate to 10-formyltetrahydrofolate. This Thermodesulfovibrio yellowstonii (strain ATCC 51303 / DSM 11347 / YP87) protein is Bifunctional protein FolD.